The following is a 102-amino-acid chain: uncharacterized protein (102 aa).

2 helical membrane-spanning segments follow: residues 24–44 (AFIV…PVLT) and 55–75 (IGAV…TWIL).

It localises to the cell membrane. This is an uncharacterized protein from Bacillus subtilis (strain 168).